A 356-amino-acid polypeptide reads, in one-letter code: MPTVLALETSCDESAAAVLRLNNGCLQVIASRIASQVEKHAQWGGVVPEVASRLHVEALPHLVEEVLQEAGQSMARFDAVAATVTPGLAGALMVGSVTGRCLAALHALPFFGIHHLEGHLASVLLAEHPPRPPYLVLLVSGGHTELIRVGAESEMVRLGRSHDDAAGEAFDKVGRLLGLAYPGGPAIQALAAAGDSGRFSLPKGRVSKPGGGFHPYDFSFSGLKTAMLRLVQALSEAGEDLPRADLAASFEQVVADVLVERSLLCANDQGLKTVVMVGGVAANRRLRELMSKRGQEQGIEVHTAPLRYCTDNAAMIGAAALQRLVSGDDASSLELGVAARWPLDKTEDLYHSPPPF.

The Fe cation site is built by His-115 and His-119. Residues 138 to 142 (LVSGG), Asp-171, Gly-184, and Asn-283 contribute to the substrate site. Asp-311 serves as a coordination point for Fe cation.

This sequence belongs to the KAE1 / TsaD family. Fe(2+) is required as a cofactor.

Its subcellular location is the cytoplasm. The catalysed reaction is L-threonylcarbamoyladenylate + adenosine(37) in tRNA = N(6)-L-threonylcarbamoyladenosine(37) in tRNA + AMP + H(+). Functionally, required for the formation of a threonylcarbamoyl group on adenosine at position 37 (t(6)A37) in tRNAs that read codons beginning with adenine. Is involved in the transfer of the threonylcarbamoyl moiety of threonylcarbamoyl-AMP (TC-AMP) to the N6 group of A37, together with TsaE and TsaB. TsaD likely plays a direct catalytic role in this reaction. The protein is tRNA N6-adenosine threonylcarbamoyltransferase of Prochlorococcus marinus (strain MIT 9303).